Consider the following 767-residue polypeptide: MQRPFLLAYLVLSLLFNSALGFPTALVPRGSSSSNITSSGPSSTPFSSATESFSTGTTVTPSSSKYPGSKTETSVSSTTETTIVPTTTTTSVITPSTTTITTTVCSTGTNSAGETTSGCSPKTITTTVPCSTSPSETASESTTTSPTTPVTTVVSTTVVTTEYSTSTKQGGEITTTFVTKNIPTTYLTTIAPTSSVTTVTNFTPTTITTTVCSTGTNSAGETTSGCSPKTVTTTVPCSTGTGEYTTEATAPVTTAVTTTVVTTESSTGTNSAGKTTTSYTTKSVPTTYVFDFGKGILDQSCGGVFSNNGSSQVQLRDVVLMNGTVVYDSNGAWDSSALEEWLQRQKKVSIERIFENIGPSAVYPSILPGVVIASPSQTHPDYFYQWIRDSALTINSIVSHSADPAIETLLQYLNVSFHLQRTNNTLGAGIGYTNDTVALGDPKWNVDNTAFTEPWGRPQNDGPALRSIAILKIIDYIKQSGTDLGAKYPFQSTADIFDDIVRWDLRFIIDHWNSSGFDLWEEVNGMHFFTLLVQLSAVDRSLSYFNASERSSPFVEELRQTRRDISKFLVDPANGFINGKYNYIVETPMIADTLRSGLDISTLLAANTVHDAPSASHLPFDINDPAVLNTLHHLMLHMRSIYPINDSSKNATGIALGRYPEDVYDGYGVGEGNPWVLATCAASTTLYQLIYRHISEQHDLVVPMNNDCSNAFWSELVFSNLTTLGNDEGYLILEFNTPAFNQTIQKIFQLADSFLVKLKATWEQTGN.

Residues 1-21 (MQRPFLLAYLVLSLLFNSALG) form the signal peptide. 2 disordered regions span residues 29–83 (RGSS…ETTI) and 125–149 (TTTV…PTTP). The span at 30–48 (GSSSSNITSSGPSSTPFSS) shows a compositional bias: low complexity. A glycan (N-linked (GlcNAc...) asparagine) is linked at Asn-35. Over residues 49–66 (ATESFSTGTTVTPSSSKY) the composition is skewed to polar residues. Low complexity-rich tracts occupy residues 71–83 (TETS…ETTI) and 131–149 (STSP…PTTP). N-linked (GlcNAc...) asparagine glycans are attached at residues Asn-308, Asn-322, Asn-414, Asn-423, and Asn-434. Residues 348–691 (VSIERIFENI…ASTTLYQLIY (344 aa)) form a h subunit region. Residue Trp-455 participates in substrate binding. N-linked (GlcNAc...) asparagine glycosylation is present at Asn-513. The active-site Proton acceptor is Asp-518. Glu-521 (proton donor) is an active-site residue. N-linked (GlcNAc...) asparagine glycans are attached at residues Asn-546, Asn-645, Asn-650, Asn-720, and Asn-741. The segment at 692 to 767 (RHISEQHDLV…LKATWEQTGN (76 aa)) is y subunit.

It belongs to the glycosyl hydrolase 15 family.

The catalysed reaction is Hydrolysis of terminal (1-&gt;4)-linked alpha-D-glucose residues successively from non-reducing ends of the chains with release of beta-D-glucose.. This Saccharomyces cerevisiae (Baker's yeast) protein is Glucoamylase S1 (STA1).